Here is a 660-residue protein sequence, read N- to C-terminus: PAN2-PAN3 deadenylation complex subunit PAN3 (660 aa).

A C3H1-type zinc finger spans residues 7–36 (SAKDTFCKNVLIYGYCKYENKGCAFSHTVK). 2 disordered regions span residues 36–60 (KPTSSVPGSQGSNATTNSSGNTNAD) and 150–186 (SPVMAQSVSTPGAKANGNIQHNPYLPGNAGTPQPTSA). The segment covering 43–59 (GSQGSNATTNSSGNTNA) has biased composition (low complexity). The PABPC-interacting motif-2 (PAM-2) signature appears at 59–79 (ADMKKKFNFNTPSFQPSTVPN). Residues 150–159 (SPVMAQSVST) show a composition bias toward polar residues. A pseudokinase domain region spans residues 252–528 (QTLPRSNLPD…LQEFNRNHLS (277 aa)). ATP-binding positions include R304, 358 to 365 (DYFPNSNT), and 415 to 416 (SK). Residues 529–567 (RRILNFCSNAQDSQDFMESQLSTELENARVFRLITKLNF) are a coiled coil. Residues 568 to 660 (IIDRPEYDND…DSAFRTLTRG (93 aa)) are knob domain.

It belongs to the protein kinase superfamily. PAN3 family. As to quaternary structure, homodimer. Forms a heterotrimer with a catalytic subunit PAN2 to form the poly(A)-nuclease (PAN) deadenylation complex. Interacts (via PAM-2 motif) with poly(A)-binding protein PAB1 (via PABC domain), conferring substrate specificity of the enzyme complex.

Its subcellular location is the cytoplasm. In terms of biological role, regulatory subunit of the poly(A)-nuclease (PAN) deadenylation complex, one of two cytoplasmic mRNA deadenylases involved in mRNA turnover. PAN specifically shortens poly(A) tails of RNA and the activity is stimulated by poly(A)-binding protein PAB1. PAN deadenylation is followed by rapid degradation of the shortened mRNA tails by the CCR4-NOT complex. Deadenylated mRNAs are then degraded by two alternative mechanisms, namely exosome-mediated 3'-5' exonucleolytic degradation, or deadenylation-dependent mRNA decaping and subsequent 5'-3' exonucleolytic degradation by XRN1. May also be involved in post-transcriptional maturation of mRNA poly(A) tails. PAN3 acts as a positive regulator for PAN activity, recruiting the catalytic subunit PAN2 to mRNA via its interaction with RNA and with PAB1. In Debaryomyces hansenii (strain ATCC 36239 / CBS 767 / BCRC 21394 / JCM 1990 / NBRC 0083 / IGC 2968) (Yeast), this protein is PAN2-PAN3 deadenylation complex subunit PAN3.